A 246-amino-acid polypeptide reads, in one-letter code: UDP-N-acetyl-D-mannosaminuronic acid transferase (246 aa).

This sequence belongs to the glycosyltransferase 26 family.

The catalysed reaction is UDP-N-acetyl-alpha-D-mannosaminouronate + N-acetyl-alpha-D-glucosaminyl-di-trans,octa-cis-undecaprenyl diphosphate = beta-D-ManNAcA-(1-&gt;4)-alpha-D-GlcNAc-di-trans,octa-cis-undecaprenyl diphosphate + UDP + H(+). It participates in bacterial outer membrane biogenesis; enterobacterial common antigen biosynthesis. Functionally, catalyzes the synthesis of Und-PP-GlcNAc-ManNAcA (Lipid II), the second lipid-linked intermediate involved in enterobacterial common antigen (ECA) synthesis. The polypeptide is UDP-N-acetyl-D-mannosaminuronic acid transferase (Serratia proteamaculans (strain 568)).